A 494-amino-acid polypeptide reads, in one-letter code: ATP synthase subunit beta, plastid (494 aa).

169-176 (GGAGVGKT) is an ATP binding site.

It belongs to the ATPase alpha/beta chains family. In terms of assembly, F-type ATPases have 2 components, CF(1) - the catalytic core - and CF(0) - the membrane proton channel. CF(1) has five subunits: alpha(3), beta(3), gamma(1), delta(1), epsilon(1). CF(0) has four main subunits: a(1), b(1), b'(1) and c(9-12).

It localises to the plastid membrane. It carries out the reaction ATP + H2O + 4 H(+)(in) = ADP + phosphate + 5 H(+)(out). Its function is as follows. Produces ATP from ADP in the presence of a proton gradient across the membrane. The catalytic sites are hosted primarily by the beta subunits. The sequence is that of ATP synthase subunit beta, plastid (atpB) from Cuscuta sandwichiana (Kauna'oa).